A 354-amino-acid polypeptide reads, in one-letter code: Ornithine carbamoyltransferase, catabolic (354 aa).

Carbamoyl phosphate is bound by residues 67–70 (STRT), glutamine 94, arginine 118, and 145–148 (HPTQ). Residues asparagine 177, aspartate 241, and 245–246 (SM) contribute to the L-ornithine site. Carbamoyl phosphate contacts are provided by residues 284–285 (CL) and arginine 329.

This sequence belongs to the aspartate/ornithine carbamoyltransferase superfamily. OTCase family.

It is found in the cytoplasm. It catalyses the reaction carbamoyl phosphate + L-ornithine = L-citrulline + phosphate + H(+). It participates in amino-acid degradation; L-arginine degradation via ADI pathway; carbamoyl phosphate from L-arginine: step 2/2. In terms of biological role, reversibly catalyzes the transfer of the carbamoyl group from carbamoyl phosphate (CP) to the N(epsilon) atom of ornithine (ORN) to produce L-citrulline. The polypeptide is Ornithine carbamoyltransferase, catabolic (arcB) (Lactococcus lactis subsp. cremoris (Streptococcus cremoris)).